A 101-amino-acid chain; its full sequence is Large ribosomal subunit protein uL24 (101 aa).

It belongs to the universal ribosomal protein uL24 family. Part of the 50S ribosomal subunit.

One of two assembly initiator proteins, it binds directly to the 5'-end of the 23S rRNA, where it nucleates assembly of the 50S subunit. Its function is as follows. One of the proteins that surrounds the polypeptide exit tunnel on the outside of the subunit. The chain is Large ribosomal subunit protein uL24 from Streptococcus pyogenes serotype M2 (strain MGAS10270).